The sequence spans 173 residues: Mesencephalic astrocyte-derived neurotrophic factor homolog (173 aa).

Positions 1-22 are cleaved as a signal peptide; the sequence is MKTWYMVVVIGFLATLAQTSLA. Cystine bridges form between Cys28/Cys114, Cys31/Cys103, Cys61/Cys72, and Cys148/Cys151.

The protein belongs to the ARMET family.

It is found in the secreted. Functionally, required during the maturation of the embryonic nervous system for maintenance of neuronal and cuticular connectivity. Essential for maintenance of dopaminergic neurons and dopamine levels. The chain is Mesencephalic astrocyte-derived neurotrophic factor homolog from Drosophila erecta (Fruit fly).